Consider the following 89-residue polypeptide: Probable Fe(2+)-trafficking protein (89 aa).

It belongs to the Fe(2+)-trafficking protein family.

Could be a mediator in iron transactions between iron acquisition and iron-requiring processes, such as synthesis and/or repair of Fe-S clusters in biosynthetic enzymes. This Stenotrophomonas maltophilia (strain R551-3) protein is Probable Fe(2+)-trafficking protein.